Consider the following 466-residue polypeptide: Cysteine--tRNA ligase (466 aa).

A Zn(2+)-binding site is contributed by cysteine 27. A 'HIGH' region motif is present at residues 29–39 (PTVYNYIHIGN). The Zn(2+) site is built by cysteine 207, histidine 232, and glutamate 236. The short motif at 264-268 (KMSKS) is the 'KMSKS' region element. Residue lysine 267 participates in ATP binding.

The protein belongs to the class-I aminoacyl-tRNA synthetase family. In terms of assembly, monomer. The cofactor is Zn(2+).

It localises to the cytoplasm. The enzyme catalyses tRNA(Cys) + L-cysteine + ATP = L-cysteinyl-tRNA(Cys) + AMP + diphosphate. The polypeptide is Cysteine--tRNA ligase (Thermoanaerobacter pseudethanolicus (strain ATCC 33223 / 39E) (Clostridium thermohydrosulfuricum)).